We begin with the raw amino-acid sequence, 618 residues long: Beta-glucosidase C (618 aa).

The signal sequence occupies residues 1–19 (MRVDSTVLALVALATDCLG). 5 N-linked (GlcNAc...) asparagine glycosylation sites follow: Asn-40, Asn-82, Asn-104, Asn-211, and Asn-263. The active site involves Asp-330. Residues Asn-417, Asn-448, Asn-477, Asn-482, Asn-502, and Asn-517 are each glycosylated (N-linked (GlcNAc...) asparagine).

This sequence belongs to the glycosyl hydrolase 3 family.

The protein resides in the secreted. The catalysed reaction is Hydrolysis of terminal, non-reducing beta-D-glucosyl residues with release of beta-D-glucose.. It functions in the pathway glycan metabolism; cellulose degradation. In terms of biological role, beta-glucosidases are one of a number of cellulolytic enzymes involved in the degradation of cellulosic biomass. Catalyzes the last step releasing glucose from the inhibitory cellobiose. The sequence is that of Beta-glucosidase C (bglC) from Emericella nidulans (strain FGSC A4 / ATCC 38163 / CBS 112.46 / NRRL 194 / M139) (Aspergillus nidulans).